The sequence spans 198 residues: Synaptobrevin homolog YKT6-A (198 aa).

The Longin domain occupies 8-127 (VLYKGENKVH…IQYNALDSYL (120 aa)). The v-SNARE coiled-coil homology domain maps to 138–198 (PMSKVQAELD…RKQNSCCDIM (61 aa)). A lipid anchor (S-palmitoyl cysteine) is attached at C194. Position 195 is a cysteine methyl ester (C195). C195 carries the S-farnesyl cysteine lipid modification. A propeptide spans 196–198 (DIM) (removed in mature form).

This sequence belongs to the synaptobrevin family. Post-translationally, palmitoylated; catalyzes its own palmitoylation. Palmitoylation is required for Golgi targeting. In terms of processing, farnesylation is required for Golgi targeting.

The protein resides in the cytoplasm. Its subcellular location is the cytosol. The protein localises to the cytoplasmic vesicle membrane. It localises to the golgi apparatus membrane. Vesicular soluble NSF attachment protein receptor (v-SNARE) mediating vesicle docking and fusion to a specific acceptor cellular compartment. Functions in endoplasmic reticulum to Golgi transport; as part of a SNARE complex composed of GOSR1, GOSR2 and STX5. Functions in early/recycling endosome to TGN transport; as part of a SNARE complex composed of BET1L, GOSR1 and STX5. Has a S-palmitoyl transferase activity. In Xenopus laevis (African clawed frog), this protein is Synaptobrevin homolog YKT6-A (ykt6-a).